The chain runs to 246 residues: Acetoacetate decarboxylase (246 aa).

K116 functions as the Schiff-base intermediate with acetoacetate in the catalytic mechanism.

The protein belongs to the ADC family.

The catalysed reaction is acetoacetate + H(+) = acetone + CO2. Catalyzes the conversion of acetoacetate to acetone and carbon dioxide. In Burkholderia lata (strain ATCC 17760 / DSM 23089 / LMG 22485 / NCIMB 9086 / R18194 / 383), this protein is Acetoacetate decarboxylase.